A 241-amino-acid polypeptide reads, in one-letter code: Small ribosomal subunit protein uS5 (241 aa).

The segment at 1–53 (MSDNEKETQVAEETQNTQAAAESNNEDRKSRRGQRGEGRRGERRNRREESHEN) is disordered. A compositionally biased stretch (low complexity) spans 11-22 (AEETQNTQAAAE). Positions 25–53 (NEDRKSRRGQRGEGRRGERRNRREESHEN) are enriched in basic and acidic residues. Residues 55-118 (MLDRVVTINR…LDAKKHMFTV (64 aa)) enclose the S5 DRBM domain.

It belongs to the universal ribosomal protein uS5 family. As to quaternary structure, part of the 30S ribosomal subunit. Contacts proteins S4 and S8.

With S4 and S12 plays an important role in translational accuracy. Its function is as follows. Located at the back of the 30S subunit body where it stabilizes the conformation of the head with respect to the body. This is Small ribosomal subunit protein uS5 from Bifidobacterium adolescentis (strain ATCC 15703 / DSM 20083 / NCTC 11814 / E194a).